The primary structure comprises 33 residues: Brevinin-2HSa (33 aa).

Cys-27 and Cys-33 are disulfide-bonded.

Expressed by the skin glands.

It localises to the secreted. In terms of biological role, has antibacterial activity against the Gram-positive bacterium S.aureus ATCC 25923 (MIC=18 uM) and the Gram-negative bacterium E.coli ATCC 25726 (MIC=36 uM). The protein is Brevinin-2HSa of Odorrana hosii (Hose's rock frog).